Here is a 134-residue protein sequence, read N- to C-terminus: Profilin-2 (134 aa).

Thr114 is subject to Phosphothreonine.

Belongs to the profilin family. Occurs in many kinds of cells as a complex with monomeric actin in a 1:1 ratio. Post-translationally, phosphorylated by MAP kinases.

Its subcellular location is the cytoplasm. It is found in the cytoskeleton. In terms of biological role, binds to actin and affects the structure of the cytoskeleton. At high concentrations, profilin prevents the polymerization of actin, whereas it enhances it at low concentrations. By binding to PIP2, it inhibits the formation of IP3 and DG. This chain is Profilin-2 (PRO2), found in Nicotiana tabacum (Common tobacco).